The following is a 165-amino-acid chain: Small ribosomal subunit protein uS13 (165 aa).

The tract at residues 139–165 (GMTIGVARKKAAQPQSQQSSSQQQKSS) is disordered. Positions 153-165 (QSQQSSSQQQKSS) are enriched in low complexity.

This sequence belongs to the universal ribosomal protein uS13 family. In terms of assembly, part of the 30S ribosomal subunit. Forms a loose heterodimer with protein S19. Forms two bridges to the 50S subunit in the 70S ribosome.

Located at the top of the head of the 30S subunit, it contacts several helices of the 16S rRNA. In the 70S ribosome it contacts the 23S rRNA (bridge B1a) and protein L5 of the 50S subunit (bridge B1b), connecting the 2 subunits; these bridges are implicated in subunit movement. In Saccharolobus solfataricus (strain ATCC 35092 / DSM 1617 / JCM 11322 / P2) (Sulfolobus solfataricus), this protein is Small ribosomal subunit protein uS13.